Reading from the N-terminus, the 677-residue chain is Methionine--tRNA ligase (677 aa).

The 'HIGH' region motif lies at 15–25 (PYANGSIHLGH). Residues Cys146, Cys149, Cys159, and Cys162 each coordinate Zn(2+). The 'KMSKS' region signature appears at 333-337 (KMSKS). Residue Lys336 coordinates ATP. A tRNA-binding domain is found at 575-677 (DFAKVDLRVA…AGAKPGHQVK (103 aa)).

Belongs to the class-I aminoacyl-tRNA synthetase family. MetG type 1 subfamily. In terms of assembly, homodimer. Requires Zn(2+) as cofactor.

It is found in the cytoplasm. It catalyses the reaction tRNA(Met) + L-methionine + ATP = L-methionyl-tRNA(Met) + AMP + diphosphate. Functionally, is required not only for elongation of protein synthesis but also for the initiation of all mRNA translation through initiator tRNA(fMet) aminoacylation. This chain is Methionine--tRNA ligase, found in Shigella sonnei (strain Ss046).